The following is a 388-amino-acid chain: Mannitol-1-phosphate 5-dehydrogenase (388 aa).

Alanine 5–glycine 16 contacts NAD(+). Lysine 213 is a catalytic residue.

Belongs to the mannitol dehydrogenase family. In terms of assembly, monomer.

The catalysed reaction is D-mannitol 1-phosphate + NAD(+) = beta-D-fructose 6-phosphate + NADH + H(+). In terms of biological role, catalyzes the NAD(H)-dependent interconversion of D-fructose 6-phosphate and D-mannitol 1-phosphate in the mannitol metabolic pathway. This is Mannitol-1-phosphate 5-dehydrogenase (mpdA) from Aspergillus fumigatus (strain CBS 144.89 / FGSC A1163 / CEA10) (Neosartorya fumigata).